The primary structure comprises 286 residues: MDFLNDHINVFGLIAALVILVLTIYESSSLIKEMRDSKSQGELVENGHLIDGIGEFANNVPVGWIASFMCTIVWAFWYFFFGYPLNSFSQIGQYNEEVKAHNQKFEAKWKHLGQKELVDMGQGIFLVHCSQCHGITAEGLHGSAQNLVRWGKEEGIMDTIKHGSKGMDYLAGEMPAMELDEKDAKAIASYVMAELSSVKKTKNPQLIDKGKELFESMGCTGCHGNDGKGLQENQVFAADLTAYGTENFLRNILTHGKKGNIGHMPSFKYKNFSDLQVKALLNLSNR.

2 consecutive transmembrane segments (helical) span residues 11-31 (FGLI…SSLI) and 62-82 (VGWI…FFFG). 2 Cytochrome c domains span residues 116-195 (ELVD…MAEL) and 205-286 (QLID…LSNR). 8 residues coordinate heme c: Cys129, Cys132, His133, Met174, Cys219, Cys222, His223, and Met264.

Belongs to the CcoP / FixP family. Component of the cbb3-type cytochrome c oxidase at least composed of CcoN, CcoO, CcoQ and CcoP. It depends on heme c as a cofactor.

The protein localises to the cell inner membrane. It functions in the pathway energy metabolism; oxidative phosphorylation. Functionally, C-type cytochrome. Part of the cbb3-type cytochrome c oxidase complex. CcoP subunit is required for transferring electrons from donor cytochrome c via its heme groups to CcoO subunit. From there, electrons are shuttled to the catalytic binuclear center of CcoN subunit where oxygen reduction takes place. The complex also functions as a proton pump. The chain is Cbb3-type cytochrome c oxidase subunit CcoP from Helicobacter pylori (strain ATCC 700392 / 26695) (Campylobacter pylori).